A 235-amino-acid chain; its full sequence is Small ribosomal subunit protein uS5 (235 aa).

Positions 60–123 (ENQEVLDIAL…NYAKMNIIEI (64 aa)) constitute an S5 DRBM domain. Positions 127, 132, 134, and 138 each coordinate Zn(2+).

This sequence belongs to the universal ribosomal protein uS5 family. Part of the 30S ribosomal subunit. Contacts protein S4. Zn(2+) serves as cofactor.

With S4 and S12 plays an important role in translational accuracy. The sequence is that of Small ribosomal subunit protein uS5 from Thermococcus kodakarensis (strain ATCC BAA-918 / JCM 12380 / KOD1) (Pyrococcus kodakaraensis (strain KOD1)).